The sequence spans 358 residues: tRNA N6-adenosine threonylcarbamoyltransferase (358 aa).

Histidine 122 and histidine 126 together coordinate Fe cation. Residues 145–149 (LVSGG), aspartate 178, glycine 191, and asparagine 287 each bind substrate. Residue aspartate 315 coordinates Fe cation.

Belongs to the KAE1 / TsaD family. Fe(2+) serves as cofactor.

It is found in the cytoplasm. The enzyme catalyses L-threonylcarbamoyladenylate + adenosine(37) in tRNA = N(6)-L-threonylcarbamoyladenosine(37) in tRNA + AMP + H(+). In terms of biological role, required for the formation of a threonylcarbamoyl group on adenosine at position 37 (t(6)A37) in tRNAs that read codons beginning with adenine. Is involved in the transfer of the threonylcarbamoyl moiety of threonylcarbamoyl-AMP (TC-AMP) to the N6 group of A37, together with TsaE and TsaB. TsaD likely plays a direct catalytic role in this reaction. This is tRNA N6-adenosine threonylcarbamoyltransferase from Hydrogenovibrio crunogenus (strain DSM 25203 / XCL-2) (Thiomicrospira crunogena).